The sequence spans 1058 residues: Probable plasma membrane ATPase (1058 aa).

The span at 1–29 shows a compositional bias: polar residues; sequence MDNNQIPKNSPESSAINSAESSPKSNVSS. Residues 1–123 form a disordered region; sequence MDNNQIPKNS…SSSGKKEEDY (123 aa). Residues 1 to 212 lie on the Cytoplasmic side of the membrane; the sequence is MDNNQIPKNS…DVKRYPILEF (212 aa). Basic and acidic residues predominate over residues 31 to 40; sequence VLHENHHKEQ. The segment covering 41–66 has biased composition (low complexity); it reads QQLQQQLQQEQQQQQLPTTPQSEPTQ. Positions 96 to 111 are enriched in polar residues; sequence SLKTISGYPSSKNTEA. A helical transmembrane segment spans residues 213–232; sequence LYFMWNPLSWTMEVAAIVSI. Residues 233–237 lie on the Extracellular side of the membrane; that stretch reads ALLDW. A helical membrane pass occupies residues 238–258; the sequence is VDFILICALLLLNATIGFIEE. At 259–387 the chain is on the cytoplasmic side; sequence NTAGNAVEAL…GHLQVILRNI (129 aa). The helical transmembrane segment at 388–407 threads the bilayer; it reads GLFCISFIAIWVLVELLVDF. Residues 408–425 lie on the Extracellular side of the membrane; sequence LGYDGYCHGVGGGRCLPL. A helical membrane pass occupies residues 426–447; sequence NNALVLLVGGIPIAMPTVLSVT. Residues 448-783 are Cytoplasmic-facing; sequence MAIGATQLSK…SSRKIFQRMR (336 aa). D480 serves as the catalytic 4-aspartylphosphate intermediate. Residues D728 and D732 each coordinate Mg(2+). Residues 784–805 form a helical membrane-spanning segment; sequence NYVIYSVAATVRICTTFGILTV. Residues 806-810 lie on the Extracellular side of the membrane; that stretch reads AWNFK. Residues 811 to 833 form a helical membrane-spanning segment; it reads FPTIATVIIAILNDGTMLTISKD. Topologically, residues 834 to 849 are cytoplasmic; sequence RVRARNEPDQWNLFEV. Residues 850 to 870 traverse the membrane as a helical segment; sequence FTMALCYGFYLVGSTIVFFAI. Over 871–889 the chain is Extracellular; it reads IHDGTWFHDAINLRILTDN. Residues 890–910 form a helical membrane-spanning segment; it reads ELRGLIYLQVSISGLATIFVS. The Cytoplasmic segment spans residues 911-922; it reads RSQGFSYFERPG. Residues 923-943 traverse the membrane as a helical segment; that stretch reads NLVIFAFVMSQIVATFIGVYG. Over 944–967 the chain is Extracellular; that stretch reads FRGYPHDSFSDNPDYPVHGTNFQG. A helical transmembrane segment spans residues 968–988; it reads CGWGWAVCAWIWCFLWYIPMD. Over 989-1058 the chain is Cytoplasmic; sequence FIKLGVTYIL…HKSVVTDNKV (70 aa).

It belongs to the cation transport ATPase (P-type) (TC 3.A.3) family. Type IIIA subfamily.

Its subcellular location is the cell membrane. It carries out the reaction ATP + H2O + H(+)(in) = ADP + phosphate + 2 H(+)(out). Acid pH levels increase its ATPase activity. Its function is as follows. P-type plasma membrane H+-ATPase (proton pump). The proton gradient it generates drives the active transport of nutrients by H(+) symport. The resulting external acidification and/or internal alkinization may mediate growth responses. This chain is Probable plasma membrane ATPase (patB), found in Dictyostelium discoideum (Social amoeba).